The sequence spans 868 residues: Leucine--tRNA ligase (868 aa).

Positions P42–H52 match the 'HIGH' region motif. Residues T624–S628 carry the 'KMSKS' region motif. An ATP-binding site is contributed by K627.

Belongs to the class-I aminoacyl-tRNA synthetase family.

It localises to the cytoplasm. The enzyme catalyses tRNA(Leu) + L-leucine + ATP = L-leucyl-tRNA(Leu) + AMP + diphosphate. This is Leucine--tRNA ligase from Nitrosomonas eutropha (strain DSM 101675 / C91 / Nm57).